We begin with the raw amino-acid sequence, 171 residues long: MNSIPEGRPTPNLQRTANKRGVARLAAVQALFQMDVAGTGVMEVVAEYEAFRLGKEVDGTQYLDADPQWFRAIVAGVVEDQLKLDPMIHQALTEDWPLSRLDSTLRAILRAGAWELKARKDVPTAVIVSEYVDIAKAFYTEDEPKLVNAVLDRLALVIRGESRGAKPRHKS.

Belongs to the NusB family.

Functionally, involved in transcription antitermination. Required for transcription of ribosomal RNA (rRNA) genes. Binds specifically to the boxA antiterminator sequence of the ribosomal RNA (rrn) operons. The sequence is that of Transcription antitermination protein NusB from Brucella melitensis biotype 1 (strain ATCC 23456 / CCUG 17765 / NCTC 10094 / 16M).